A 356-amino-acid polypeptide reads, in one-letter code: Protein-arginine kinase (356 aa).

The Phosphagen kinase C-terminal domain maps to 24-254; the sequence is IVLSTRIRLA…HQLIQQEKAA (231 aa). Residues 27-31, histidine 92, arginine 125, 176-180, and 207-212 each bind ATP; these read STRIR, RASVM, and RGIYGE. An RDXXRA motif of the pArg binding pocket involved in allosteric regulation motif is present at residues 337 to 342; the sequence is RDYRRA.

The protein belongs to the ATP:guanido phosphotransferase family.

It catalyses the reaction L-arginyl-[protein] + ATP = N(omega)-phospho-L-arginyl-[protein] + ADP + H(+). Its activity is regulated as follows. Appears to be allosterically activated by the binding of pArg-containing polypeptides to the pArg-binding pocket localized in the C-terminal domain of McsB. In terms of biological role, catalyzes the specific phosphorylation of arginine residues in a large number of proteins. Is part of the bacterial stress response system. Protein arginine phosphorylation has a physiologically important role and is involved in the regulation of many critical cellular processes, such as protein homeostasis, motility, competence, and stringent and stress responses, by regulating gene expression and protein activity. In Bacillus cytotoxicus (strain DSM 22905 / CIP 110041 / 391-98 / NVH 391-98), this protein is Protein-arginine kinase.